We begin with the raw amino-acid sequence, 369 residues long: Transmembrane protein adipocyte-associated 1 (369 aa).

N20 is a glycosylation site (N-linked (GlcNAc...) asparagine). 7 consecutive transmembrane segments (helical) span residues 45-65 (LLLL…LPLA), 73-93 (SSPI…VGIA), 120-140 (FFLL…GHLE), 148-168 (VLAI…TLEI), 189-209 (QFWL…VILP), 237-257 (LLQG…LCCV), and 262-282 (FLYF…GFFG). N329 carries N-linked (GlcNAc...) asparagine glycosylation.

This sequence belongs to the UPF0359 family. As to expression, ubiquitous, with higher levels in heart, brain, lung, liver and kidney.

It localises to the membrane. The chain is Transmembrane protein adipocyte-associated 1 (Tpra1) from Mus musculus (Mouse).